The following is a 561-amino-acid chain: Melanopsin-A (561 aa).

Over 1–34 (MRPSTDTMEADTAATHRNFITKVDVPDHAHYTVA) the chain is Extracellular. The helical transmembrane segment at 35–55 (FFVSVIGTLGVTGNALVQFAF) threads the bilayer. The Cytoplasmic segment spans residues 56–68 (YSNKKLRNLPNYF). Residues 69-89 (IMNQAASDFLMAFTQSPFFFI) form a helical membrane-spanning segment. At 90-104 (NCLNREWIFGELGCK) the chain is on the extracellular side. Cysteine 103 and cysteine 181 are joined by a disulfide. Residues 105 to 125 (LYAFLGALFGITSMINLLAIS) form a helical membrane-spanning segment. The Cytoplasmic segment spans residues 126-148 (LDRYMVITRPLEAMKWNSKRRTT). Residues 149 to 169 (IAILLVWLYSLAWSLAPLVGW) traverse the membrane as a helical segment. The Extracellular segment spans residues 170–201 (SSYIPEGLRTSCTWDYVTYTASNRSYTMMLCC). Asparagine 192 carries an N-linked (GlcNAc...) asparagine glycan. A helical membrane pass occupies residues 202–222 (FVFFIPLAIISYCYLFMFLAI). The Cytoplasmic portion of the chain corresponds to 223–255 (RKTSRDVERLGIQVRKSTIIRQKSIRTEWKLAK). A helical membrane pass occupies residues 256–276 (IAFVVIVVYVLSWSPYACVTM). Residues 277-291 (ISWSGHANILSPYSK) lie on the Extracellular side of the membrane. A helical transmembrane segment spans residues 292 to 312 (TVPAVIAKASTIYNPFIYAII). The residue at position 299 (lysine 299) is an N6-(retinylidene)lysine. Topologically, residues 313–561 (HQKYRKTLAD…EDSLEDNDVV (249 aa)) are cytoplasmic. 4 disordered regions span residues 359 to 385 (AIRR…SYSS), 404 to 448 (ASFR…SATH), 479 to 503 (NGLS…SKSA), and 539 to 561 (SFTD…NDVV). The span at 371–385 (ASASKTAAGASSYSS) shows a compositional bias: low complexity. Residues 550 to 561 (VDEDSLEDNDVV) show a composition bias toward acidic residues.

Belongs to the G-protein coupled receptor 1 family. Opsin subfamily. Expressed in retina and brain. Expressed in a subset of retinal horizontal cells as well as a small number of amacrine and retinal ganglion cells. Also expressed in a small population of neurons in the suprachiasmatic nucleus (SNC).

The protein resides in the cell membrane. Its function is as follows. Photoreceptor implicated in non-image-forming responses to light. The sequence is that of Melanopsin-A (opn4a) from Gadus morhua (Atlantic cod).